Reading from the N-terminus, the 280-residue chain is Meiotic driver wtf35 (280 aa).

Residues 1 to 29 (MKNKDYPLRTSMDELSTKNDNEIDLEKGP) are compositionally biased toward basic and acidic residues. 2 disordered regions span residues 1–49 (MKNK…DLNN) and 64–100 (NKSTTPPDYDENRLPITDEGNNPPNTHRENHSSGTTD). 4 helical membrane passes run 105–125 (FLIKLLISFTSIILFNAPAVC), 142–162 (WTLIGFWCASSLIIFTFSWYF), 184–204 (IPMAFSEVFLFNILVGSPRVA), and 218–238 (SLADHIIFAILSILVFIVETV).

This sequence belongs to the WTF family. As to quaternary structure, homomer. Forms protein aggregates. The two isoforms can interact with each other and with themselves. High sequence similarity is required for their interaction.

The protein localises to the spore membrane. Its subcellular location is the vacuole membrane. It is found in the ascus epiplasm. It localises to the cytoplasm. The protein resides in the endoplasmic reticulum membrane. Functionally, promotes unequal transmission of alleles from the parental zygote to progeny spores by acting as poison/antidote system where the poison and antidote proteins are produced from the same locus; the poison component is trans-acting and targets all spores within an ascus whereas the antidote component is spore-specific, leading to poisoning of all progeny that do not inherit the allele. Localizes isoform 2 to the vacuole thereby facilitating its degradation. In terms of biological role, forms toxic aggregates that disrupt spore maturation. In Schizosaccharomyces pombe (Fission yeast), this protein is Meiotic driver wtf35.